The following is a 357-amino-acid chain: Putative ABC transporter ATP-binding protein MG303 (357 aa).

An ABC transporter domain is found at 72-312 (LFFNNISVFV…TSWLMQYGIT (241 aa)). 107–114 (GESGSGKT) serves as a coordination point for ATP.

Belongs to the ABC transporter superfamily.

The sequence is that of Putative ABC transporter ATP-binding protein MG303 from Mycoplasma genitalium (strain ATCC 33530 / DSM 19775 / NCTC 10195 / G37) (Mycoplasmoides genitalium).